The chain runs to 554 residues: Phosphomethylpyrimidine synthase (554 aa).

Residues N188, M217, Y246, H282, 302-304, 343-346, and E382 contribute to the substrate site; these read SRG and DGLR. Position 386 (H386) interacts with Zn(2+). Y409 is a binding site for substrate. H450 provides a ligand contact to Zn(2+). C530, C533, and C538 together coordinate [4Fe-4S] cluster.

The protein belongs to the ThiC family. As to quaternary structure, homodimer. [4Fe-4S] cluster serves as cofactor.

The enzyme catalyses 5-amino-1-(5-phospho-beta-D-ribosyl)imidazole + S-adenosyl-L-methionine = 4-amino-2-methyl-5-(phosphooxymethyl)pyrimidine + CO + 5'-deoxyadenosine + formate + L-methionine + 3 H(+). It participates in cofactor biosynthesis; thiamine diphosphate biosynthesis. In terms of biological role, catalyzes the synthesis of the hydroxymethylpyrimidine phosphate (HMP-P) moiety of thiamine from aminoimidazole ribotide (AIR) in a radical S-adenosyl-L-methionine (SAM)-dependent reaction. The polypeptide is Phosphomethylpyrimidine synthase (Coxiella burnetii (strain RSA 493 / Nine Mile phase I)).